The primary structure comprises 91 residues: Small ribosomal subunit protein bS18 (91 aa).

This sequence belongs to the bacterial ribosomal protein bS18 family. Part of the 30S ribosomal subunit. Forms a tight heterodimer with protein bS6.

Its function is as follows. Binds as a heterodimer with protein bS6 to the central domain of the 16S rRNA, where it helps stabilize the platform of the 30S subunit. The polypeptide is Small ribosomal subunit protein bS18 (Syntrophotalea carbinolica (strain DSM 2380 / NBRC 103641 / GraBd1) (Pelobacter carbinolicus)).